Here is a 200-residue protein sequence, read N- to C-terminus: Small ribosomal subunit protein eS1 (200 aa).

Belongs to the eukaryotic ribosomal protein eS1 family.

The polypeptide is Small ribosomal subunit protein eS1 (Thermococcus sibiricus (strain DSM 12597 / MM 739)).